The following is a 197-amino-acid chain: Phosphoheptose isomerase (197 aa).

One can recognise an SIS domain in the interval 37 to 197 (MLQCLMNDGK…CIDSVLLEGM (161 aa)). 52–54 (NGG) serves as a coordination point for substrate. Residues His61 and Glu65 each coordinate Zn(2+). Substrate is bound by residues Glu65, 94-95 (ND), 120-122 (STS), Ser125, and Gln175. Gln175 and His183 together coordinate Zn(2+).

It belongs to the SIS family. GmhA subfamily. Homotetramer. The cofactor is Zn(2+).

Its subcellular location is the cytoplasm. It catalyses the reaction 2 D-sedoheptulose 7-phosphate = D-glycero-alpha-D-manno-heptose 7-phosphate + D-glycero-beta-D-manno-heptose 7-phosphate. Its pathway is carbohydrate biosynthesis; D-glycero-D-manno-heptose 7-phosphate biosynthesis; D-glycero-alpha-D-manno-heptose 7-phosphate and D-glycero-beta-D-manno-heptose 7-phosphate from sedoheptulose 7-phosphate: step 1/1. Its function is as follows. Catalyzes the isomerization of sedoheptulose 7-phosphate in D-glycero-D-manno-heptose 7-phosphate. In Neisseria gonorrhoeae (strain ATCC 700825 / FA 1090), this protein is Phosphoheptose isomerase.